Here is a 228-residue protein sequence, read N- to C-terminus: MSTLWADLGPSLLPAFWVTIQLTVYSAIGSMILGTILTAMRVSPVKILRSISTAYINTVRNTPLTLVILFCSFGLYQNLGLTLAGRDSSTFLADNNFRLAVLGFILYTSAFVAESLRSGINTVHFGQAEAARSLGLGFSDIFRSIIFPQAVRAAIIPLGNTLIALTKNTTIASVIGVGEASLLMKSTIENHANMLFVVFAIFAVGFMILTLPMGLGLGKLAEKMAVKK.

The next 4 membrane-spanning stretches (helical) occupy residues 16 to 36, 64 to 84, 100 to 120, and 195 to 215; these read FWVT…LGTI, LTLV…LTLA, AVLG…RSGI, and LFVV…PMGL. The 202-residue stretch at 16 to 217 folds into the ABC transmembrane type-1 domain; that stretch reads FWVTIQLTVY…ILTLPMGLGL (202 aa).

Belongs to the binding-protein-dependent transport system permease family. HisMQ subfamily. The complex is composed of two ATP-binding proteins (GluA), two transmembrane proteins (GluC and GluD) and a solute-binding protein (GluB).

It is found in the cell membrane. Functionally, part of the ABC transporter complex GluABCD involved in glutamate uptake. Probably responsible for the translocation of the substrate across the membrane. The protein is Glutamate transport system permease protein GluC of Corynebacterium efficiens (strain DSM 44549 / YS-314 / AJ 12310 / JCM 11189 / NBRC 100395).